Here is a 377-residue protein sequence, read N- to C-terminus: Nitric oxide reductase FlRd-NAD(+) reductase (377 aa).

This sequence belongs to the FAD-dependent oxidoreductase family. Requires FAD as cofactor.

The protein localises to the cytoplasm. The enzyme catalyses 2 reduced [nitric oxide reductase rubredoxin domain] + NAD(+) + H(+) = 2 oxidized [nitric oxide reductase rubredoxin domain] + NADH. It functions in the pathway nitrogen metabolism; nitric oxide reduction. In terms of biological role, one of at least two accessory proteins for anaerobic nitric oxide (NO) reductase. Reduces the rubredoxin moiety of NO reductase. The polypeptide is Nitric oxide reductase FlRd-NAD(+) reductase (Salmonella paratyphi C (strain RKS4594)).